Consider the following 108-residue polypeptide: FK506-binding protein 1 (108 aa).

Residues 20 to 108 (GDNVTIHYVG…KFEVELLKVN (89 aa)) form the PPIase FKBP-type domain.

The protein belongs to the FKBP-type PPIase family. FKBP1 subfamily.

It is found in the cytoplasm. The catalysed reaction is [protein]-peptidylproline (omega=180) = [protein]-peptidylproline (omega=0). With respect to regulation, inhibited by both FK506 and rapamycin. Functionally, PPIases accelerate the folding of proteins. It catalyzes the cis-trans isomerization of proline imidic peptide bonds in oligopeptides. This is FK506-binding protein 1 (FRR1) from Cryptococcus neoformans var. grubii serotype A (strain H99 / ATCC 208821 / CBS 10515 / FGSC 9487) (Filobasidiella neoformans var. grubii).